Reading from the N-terminus, the 586-residue chain is MTTPAGSGTGYGSVSWWGLSPALDLQAESPPVDPDSQSKTERKVPELDALLLGSVDGRHMLRTLARAALWPLRSFNFYVLENNLEAVARHMLIFSLALEEPEKMGLQERSETFLELWGNALLRPSVAAFLRAQASHLANLVLEPDRLEEQLPWLSLRLLKFRERDALEAVFRFWSGGEKGPEVFPMSRLWDSRLRHYLGSRYDARRGVADWDLRMKLHDRGAQVIHIQEFRRWRDTGVAFELRDLSAYHVPNRTLASGRLLSHRGERVAARGYWGDIATGPFMAFGIEADDQSLLRTRNGQPVKTASEITQHNVTELFREVAAWRGPRAIQGNVEETESPEPDVPAQEPFTIHFLPLDSSQTLHHKTCYQGRFQLLYVSCGMVHLLSPELGACVAPGGNLVVELARYLVDLRPKELKAFSDRVVEIARVAGFAPHTATKPSETFARFYKLGDSTPGGGDSAVESGPAPSKVESTRAPLPESISPPQANQAPSLEAMSPPLADLAPPLETMCPPQANQAPPLEALSPSKADQIPPLEAMSPPQAKLVLPVEAISLPQADLASPPEVISPLQEAMATSWVNAPPKHVT.

The interval 455–493 is disordered; sequence PGGGDSAVESGPAPSKVESTRAPLPESISPPQANQAPSL.

Belongs to the DNAAF3 family.

It is found in the cytoplasm. Its subcellular location is the dynein axonemal particle. Required for the assembly of axonemal inner and outer dynein arms. Involved in preassembly of dyneins into complexes before their transport into cilia. In Mus musculus (Mouse), this protein is Dynein axonemal assembly factor 3 (Dnaaf3).